A 439-amino-acid polypeptide reads, in one-letter code: GTPase Der (439 aa).

2 EngA-type G domains span residues 4–168 (PIVA…KDDE) and 177–352 (INIA…DNYT). Residues 10–17 (GRPNVGKS), 57–61 (DTGGI), 120–123 (NKID), 183–190 (GKPNVGKS), 230–234 (DTAGL), and 295–298 (NKWD) each bind GTP. A KH-like domain is found at 353–437 (KRVKTGVLND…GIKLEFRERK (85 aa)).

The protein belongs to the TRAFAC class TrmE-Era-EngA-EngB-Septin-like GTPase superfamily. EngA (Der) GTPase family. Associates with the 50S ribosomal subunit.

In terms of biological role, GTPase that plays an essential role in the late steps of ribosome biogenesis. This Clostridium botulinum (strain Langeland / NCTC 10281 / Type F) protein is GTPase Der.